Reading from the N-terminus, the 344-residue chain is Selenide, water dikinase (344 aa).

The active site involves cysteine 16. ATP contacts are provided by residues lysine 19 and 47-49 (SRD). Aspartate 50 contributes to the Mg(2+) binding site. Residues aspartate 67, aspartate 90, and 138–140 (GHS) contribute to the ATP site. Position 90 (aspartate 90) interacts with Mg(2+). Position 226 (aspartate 226) interacts with Mg(2+).

This sequence belongs to the selenophosphate synthase 1 family. Class I subfamily. In terms of assembly, homodimer. Requires Mg(2+) as cofactor.

The catalysed reaction is hydrogenselenide + ATP + H2O = selenophosphate + AMP + phosphate + 2 H(+). In terms of biological role, synthesizes selenophosphate from selenide and ATP. This is Selenide, water dikinase from Pseudomonas putida (strain ATCC 47054 / DSM 6125 / CFBP 8728 / NCIMB 11950 / KT2440).